The chain runs to 858 residues: M-phase phosphoprotein 8 (858 aa).

Residues 18-55 are disordered; the sequence is VPDSIGRSPESEGVGAGDEEKDAATKGTVAVGDSEEDG. Phosphoserine occurs at positions 51, 85, 136, and 138. The region spanning 59 to 118 is the Chromo domain; sequence FEVERILDMKCEGGKNLYKVRWKGYTSEDDTWEPEVHLEDCKEVLLEFRKKLAENKAKAV. The segment at 80–87 is histone H3K9me3 binding; the sequence is WKGYTSED. The interval 129–175 is disordered; that stretch reads NDIFEADSDSDQQSDTKEDISPRKKKKKIKCKEETSPEDLRKKRTKM. Thr-144 is subject to Phosphothreonine. Ser-149 and Ser-164 each carry phosphoserine; by CDK1. Residues 159 to 169 are compositionally biased toward basic and acidic residues; that stretch reads CKEETSPEDLR. Residue Ser-188 is modified to Phosphoserine. 2 disordered regions span residues 209-234 and 250-300; these read ELKDSKKPKKDEIKETKELKKANKRA and NRKT…DKTA. A phosphoserine mark is found at Ser-267, Ser-271, and Ser-278. Positions 273–282 are enriched in acidic residues; sequence ILEDDSEDFI. Over residues 283–300 the composition is skewed to basic and acidic residues; sequence SDNREENQNVRSVRDKTA. Phosphoserine is present on Ser-318. The segment at 321–431 is disordered; that stretch reads EDAGTRVRRK…YDLDKEEKAR (111 aa). Over residues 335 to 357 the composition is skewed to basic and acidic residues; sequence RKFEEPKEIKKLESTNAFLERRA. At Thr-385 the chain carries Phosphothreonine; by CDK1. Ser-392 and Ser-400 each carry phosphoserine. A compositionally biased stretch (basic and acidic residues) spans 407 to 431; that stretch reads EKEKKNEPKGKYQKRYDLDKEEKAR. The residue at position 453 (Thr-453) is a Phosphothreonine. 4 ANK repeats span residues 598–627, 631–660, 664–693, and 697–726; these read TGMTLVMLAAAGGQDDLLRLLITKGAKVNG, NGTTALIHAAEKNFLTTVAILLEAGAFVNV, NGETALMKACKRGNSDIVRLVIECGADCNI, and HQNSALYFAKQCNNVLVYELLKSHLETLSR.

Homodimer. Interacts (via chromo domain) with histone H3K9me3. Has the highest affinity for H3K9me3, and lesser affinity for H3K9me2 and H3K9me1. Component of the HUSH complex; at least composed of TASOR, PPHLN1 and MPHOSPH8. Interacts with DNMT3, EHMT1 and SETDB1. Interacts with MORC2; the interaction associateS MORC2 with the HUSH complex which recruits MORC2 to heterochromatic loci. Interacts with ZNF638; leading to recruitment of the HUSH complex to unintegrated retroviral DNA. Interacts with TASOR. In terms of processing, phosphorylated in M (mitotic) phase. Phosphorylation by CDK1 promotes dissociation from chromatin. In terms of tissue distribution, expressed in the spermatogonia, spermatocytes and granular cells within the cerebellum.

The protein resides in the nucleus. It localises to the chromosome. Heterochromatin component that specifically recognizes and binds methylated 'Lys-9' of histone H3 (H3K9me) and promotes recruitment of proteins that mediate epigenetic repression. Mediates recruitment of the HUSH complex to H3K9me3 sites: the HUSH complex is recruited to genomic loci rich in H3K9me3 and is required to maintain transcriptional silencing by promoting recruitment of SETDB1, a histone methyltransferase that mediates further deposition of H3K9me3, as well as MORC2. Binds H3K9me and promotes DNA methylation by recruiting DNMT3A to target CpG sites; these can be situated within the coding region of the gene. Mediates down-regulation of CDH1 expression. Also represses L1 retrotransposons in collaboration with MORC2 and, probably, SETDB1, the silencing is dependent of repressive epigenetic modifications, such as H3K9me3 mark. Silencing events often occur within introns of transcriptionally active genes, and lead to the down-regulation of host gene expression. The HUSH complex is also involved in the silencing of unintegrated retroviral DNA by being recruited by ZNF638: some part of the retroviral DNA formed immediately after infection remains unintegrated in the host genome and is transcriptionally repressed. This is M-phase phosphoprotein 8 from Mus musculus (Mouse).